The primary structure comprises 217 residues: 3,4-dihydroxy-2-butanone 4-phosphate synthase (217 aa).

D-ribulose 5-phosphate contacts are provided by residues 37–38, aspartate 42, 150–154, and glutamate 174; these read RE and RRGHT. Residue glutamate 38 participates in Mg(2+) binding. Histidine 153 serves as a coordination point for Mg(2+).

The protein belongs to the DHBP synthase family. Homodimer. Requires Mg(2+) as cofactor. Mn(2+) serves as cofactor.

The catalysed reaction is D-ribulose 5-phosphate = (2S)-2-hydroxy-3-oxobutyl phosphate + formate + H(+). It participates in cofactor biosynthesis; riboflavin biosynthesis; 2-hydroxy-3-oxobutyl phosphate from D-ribulose 5-phosphate: step 1/1. Catalyzes the conversion of D-ribulose 5-phosphate to formate and 3,4-dihydroxy-2-butanone 4-phosphate. The chain is 3,4-dihydroxy-2-butanone 4-phosphate synthase from Shewanella sediminis (strain HAW-EB3).